The chain runs to 23 residues: Defensin D4 (23 aa).

Belongs to the DEFL family. Group IV subfamily. Distributed in the epidermal cell layer of leaves and in the subepidermal layer region of stems. Not in roots.

It is found in the secreted. The protein localises to the cell wall. Its function is as follows. Antimicrobial peptide. Active against Fusarium spp., Gram-positive and Gram-negative bacterial pathogens. This is Defensin D4 from Spinacia oleracea (Spinach).